The following is a 417-amino-acid chain: MLKREMNIADYDAELWQAMEQEKVRQEEHIELIASENYTSPRVMQAQGSQLTNKYAEGYPGKRYYGGCEYVDVVEQLAIDRAKELFGADYANVQPHSGSQANFAVYTALLQPGDTVLGMNLAQGGHLTHGSPVNFSGKLYNIIPYGIDESGKIDYDDMAKQAQEHKPKMIIGGFSAYSGIVDWAKMREIADSIGAYLFVDMAHVAGLIAAGVYPNPVPHAHVVTTTTHKTLAGPRGGLILAKGGSEELYKKLNSAVFPSAQGGPLMHVIAAKAVALKEAMEPEFKVYQQQVAKNAKAMVEVFLNRGYKVVSGGTENHLFLLDLVDKNLTGKEADAALGRANITVNKNSVPNDPKSPFVTSGIRIGSPAVTRRGFKEAEVKELAGWMCDVLDNINDDAVIERVKGKVLDICARFPVYA.

(6S)-5,6,7,8-tetrahydrofolate-binding positions include leucine 121 and 125 to 127 (GHL). Residue lysine 229 is modified to N6-(pyridoxal phosphate)lysine. Position 355–357 (355–357 (SPF)) interacts with (6S)-5,6,7,8-tetrahydrofolate.

Belongs to the SHMT family. In terms of assembly, homodimer. It depends on pyridoxal 5'-phosphate as a cofactor.

The protein localises to the cytoplasm. The enzyme catalyses (6R)-5,10-methylene-5,6,7,8-tetrahydrofolate + glycine + H2O = (6S)-5,6,7,8-tetrahydrofolate + L-serine. It participates in one-carbon metabolism; tetrahydrofolate interconversion. The protein operates within amino-acid biosynthesis; glycine biosynthesis; glycine from L-serine: step 1/1. In terms of biological role, catalyzes the reversible interconversion of serine and glycine with tetrahydrofolate (THF) serving as the one-carbon carrier. This reaction serves as the major source of one-carbon groups required for the biosynthesis of purines, thymidylate, methionine, and other important biomolecules. Also exhibits THF-independent aldolase activity toward beta-hydroxyamino acids, producing glycine and aldehydes, via a retro-aldol mechanism. The chain is Serine hydroxymethyltransferase from Klebsiella pneumoniae subsp. pneumoniae (strain ATCC 700721 / MGH 78578).